Here is a 211-residue protein sequence, read N- to C-terminus: Histidine biosynthesis bifunctional protein HisIE (211 aa).

Residues 1 to 107 (MNKLIDFSKG…FNSEIESRFK (107 aa)) are phosphoribosyl-AMP cyclohydrolase. A phosphoribosyl-ATP pyrophosphohydrolase region spans residues 108-211 (IQALAQTIHQ…KGERKKVQEW (104 aa)).

It in the N-terminal section; belongs to the PRA-CH family. In the C-terminal section; belongs to the PRA-PH family.

The protein localises to the cytoplasm. It carries out the reaction 1-(5-phospho-beta-D-ribosyl)-ATP + H2O = 1-(5-phospho-beta-D-ribosyl)-5'-AMP + diphosphate + H(+). The enzyme catalyses 1-(5-phospho-beta-D-ribosyl)-5'-AMP + H2O = 1-(5-phospho-beta-D-ribosyl)-5-[(5-phospho-beta-D-ribosylamino)methylideneamino]imidazole-4-carboxamide. It participates in amino-acid biosynthesis; L-histidine biosynthesis; L-histidine from 5-phospho-alpha-D-ribose 1-diphosphate: step 2/9. Its pathway is amino-acid biosynthesis; L-histidine biosynthesis; L-histidine from 5-phospho-alpha-D-ribose 1-diphosphate: step 3/9. The chain is Histidine biosynthesis bifunctional protein HisIE from Staphylococcus epidermidis (strain ATCC 12228 / FDA PCI 1200).